The primary structure comprises 497 residues: uncharacterized protein (497 aa).

ABC transporter domains follow at residues V9–A247 and A256–A496. Residue G41–S48 participates in ATP binding.

This sequence belongs to the ABC transporter superfamily. Ribose importer (TC 3.A.1.2.1) family.

The protein localises to the cell membrane. Its function is as follows. Probably part of the binding-protein-dependent transport system y4mIJK. This system probably transports a sugar. Probably responsible for energy coupling to the transport system. This is an uncharacterized protein from Sinorhizobium fredii (strain NBRC 101917 / NGR234).